The following is a 32-amino-acid chain: uncharacterized protein (32 aa).

This is an uncharacterized protein from Saccharomyces cerevisiae (strain ATCC 204508 / S288c) (Baker's yeast).